An 876-amino-acid chain; its full sequence is Alanine--tRNA ligase (876 aa).

Residue Lys74 is modified to N6-acetyllysine. Residues His564, His568, Cys666, and His670 each contribute to the Zn(2+) site.

Belongs to the class-II aminoacyl-tRNA synthetase family. As to quaternary structure, homotetramer. Zn(2+) serves as cofactor.

Its subcellular location is the cytoplasm. The catalysed reaction is tRNA(Ala) + L-alanine + ATP = L-alanyl-tRNA(Ala) + AMP + diphosphate. Catalyzes the attachment of alanine to tRNA(Ala) in a two-step reaction: alanine is first activated by ATP to form Ala-AMP and then transferred to the acceptor end of tRNA(Ala). Also edits incorrectly charged Ser-tRNA(Ala) and Gly-tRNA(Ala) via its editing domain. This chain is Alanine--tRNA ligase, found in Escherichia coli O157:H7.